The following is a 175-amino-acid chain: ATP synthase subunit delta (175 aa).

The protein belongs to the ATPase delta chain family. In terms of assembly, F-type ATPases have 2 components, F(1) - the catalytic core - and F(0) - the membrane proton channel. F(1) has five subunits: alpha(3), beta(3), gamma(1), delta(1), epsilon(1). F(0) has three main subunits: a(1), b(2) and c(10-14). The alpha and beta chains form an alternating ring which encloses part of the gamma chain. F(1) is attached to F(0) by a central stalk formed by the gamma and epsilon chains, while a peripheral stalk is formed by the delta and b chains.

The protein localises to the cell membrane. F(1)F(0) ATP synthase produces ATP from ADP in the presence of a proton or sodium gradient. F-type ATPases consist of two structural domains, F(1) containing the extramembraneous catalytic core and F(0) containing the membrane proton channel, linked together by a central stalk and a peripheral stalk. During catalysis, ATP synthesis in the catalytic domain of F(1) is coupled via a rotary mechanism of the central stalk subunits to proton translocation. Its function is as follows. This protein is part of the stalk that links CF(0) to CF(1). It either transmits conformational changes from CF(0) to CF(1) or is implicated in proton conduction. This is ATP synthase subunit delta from Elusimicrobium minutum (strain Pei191).